We begin with the raw amino-acid sequence, 530 residues long: uncharacterized protein (530 aa).

Basic and acidic residues-rich tracts occupy residues 1 to 11 (MTALNDTERAV) and 28 to 38 (PRSEETASERP). Positions 1–38 (MTALNDTERAVRNWTAGRPHRPAPMRPPRSEETASERP) are disordered. Topologically, residues 1–50 (MTALNDTERAVRNWTAGRPHRPAPMRPPRSEETASERPSRYYPTWLPSRS) are cytoplasmic. The helical transmembrane segment at 51-71 (FIAAVIAIGGMQLLATMDSTV) threads the bilayer. At 72–91 (AIVALPKIQNELSLSDAGRS) the chain is on the extracellular side. The chain crosses the membrane as a helical span at residues 92–112 (WVITAYVLTFGGLMLLGGRLG). At 113–119 (DTIGRKR) the chain is on the cytoplasmic side. Residues 120 to 140 (TFIVGVALFTISSVLCAVAWD) traverse the membrane as a helical segment. At 141–150 (EATLVIARLS) the chain is on the extracellular side. A helical transmembrane segment spans residues 151-171 (QGVGSAIASPTGLALVATTFP). Residues 172–180 (KGPARNAAT) lie on the Cytoplasmic side of the membrane. A helical transmembrane segment spans residues 181 to 201 (AVFAAMTAIGSVMGLVVGGAL). At 202–203 (TE) the chain is on the extracellular side. Residues 204–224 (VSWRWAFLVNVPIGLVMIYLA) form a helical membrane-spanning segment. Residues 225–239 (RTALRETNKERMKLD) lie on the Cytoplasmic side of the membrane. The chain crosses the membrane as a helical span at residues 240–260 (ATGAILATLACTAAVFAFSIG). The Extracellular portion of the chain corresponds to 261-266 (PEKGWM). A helical transmembrane segment spans residues 267 to 287 (SGITIGSGLVALAAAVAFVIV). Topologically, residues 288–306 (ERTAENPVVPFHLFRDRNR) are cytoplasmic. A helical transmembrane segment spans residues 307 to 327 (LVTFSAILLAGGVMFSLTVCI). The Extracellular segment spans residues 328–343 (GLYVQDILGYSALRAG). Residues 344-364 (VGFIPFVIAMGIGLGVSSQLV) traverse the membrane as a helical segment. Residues 365–370 (SRFSPR) lie on the Cytoplasmic side of the membrane. The chain crosses the membrane as a helical span at residues 371–391 (VLTIGGGYLLFGAMLYGSFFM). The Extracellular portion of the chain corresponds to 392–400 (HRGVPYFPN). The chain crosses the membrane as a helical span at residues 401-421 (LVMPIVVGGIGIGMAVVPLTL). Residues 422–437 (SAIAGVGFDQIGPVSA) lie on the Cytoplasmic side of the membrane. A helical transmembrane segment spans residues 438–458 (IALMLQSLGGPLVLAVIQAVI). Over 459–488 (TSRTLYLGGTTGPVKFMNDVQLAALDHAYT) the chain is Extracellular. The chain crosses the membrane as a helical span at residues 489-509 (YGLLWVAGAAIIVGGMALFIG). At 510–530 (YTPQQVAHAQEVKEAIDAGEL) the chain is on the cytoplasmic side.

The protein belongs to the major facilitator superfamily.

It localises to the cell membrane. This is an uncharacterized protein from Mycobacterium tuberculosis (strain CDC 1551 / Oshkosh).